Reading from the N-terminus, the 807-residue chain is Lysyl oxidase homolog 3B (807 aa).

A signal peptide spans 1-24 (MELHQWCRHIIVFLLNVWIPSCFA). SRCR domains are found at residues 49–150 (FRLS…VICK), 175–288 (VRLR…VSCV), 309–409 (TRLK…VRCN), 419–470 (VRIL…LGYA), and 476–579 (VRLS…VICS). 9 disulfides stabilise this stretch: C75-C139, C88-C149, C119-C129, C207-C277, C220-C287, C254-C264, C334-C398, C347-C408, and C378-C388. An N-linked (GlcNAc...) asparagine glycan is attached at N272. N-linked (GlcNAc...) asparagine glycosylation is present at N392. 2 disulfide bridges follow: C514–C578 and C547–C557. N536 is a glycosylation site (N-linked (GlcNAc...) asparagine). N679 carries an N-linked (GlcNAc...) asparagine glycan. The lysine tyrosylquinone (Lys-Tyr) cross-link spans 688-724 (KASFCLEDTDCDEGVSKRYKCANFGEQGITVGCWDLY). The residue at position 724 (Y724) is a 2',4',5'-topaquinone.

This sequence belongs to the lysyl oxidase family. Cu cation is required as a cofactor. The cofactor is lysine tyrosylquinone residue. In terms of processing, the lysine tyrosylquinone cross-link (LTQ) is generated by condensation of the epsilon-amino group of a lysine with a topaquinone produced by oxidation of tyrosine.

The protein localises to the secreted. The protein resides in the extracellular space. It is found in the cytoplasm. It localises to the nucleus. It carries out the reaction L-lysyl-[protein] + O2 + H2O = (S)-2-amino-6-oxohexanoyl-[protein] + H2O2 + NH4(+). The catalysed reaction is N(6)-acetyl-L-lysyl-[protein] + O2 + H2O = acetamide + (S)-2-amino-6-oxohexanoyl-[protein] + H2O2. In terms of biological role, protein-lysine 6-oxidase that mediates the oxidation of peptidyl lysine residues to allysine in target proteins. Catalyzes the post-translational oxidative deamination of peptidyl lysine residues in precursors of elastin and different types of collagens, a prerequisite in the formation of cross-links between collagens and elastin. Can mediate oxidation of lysine residues that are acetylated. Also able to catalyze deacetylation of lysine residues. Required for maturation of neural crest derived cartilage elements. The sequence is that of Lysyl oxidase homolog 3B from Danio rerio (Zebrafish).